A 130-amino-acid polypeptide reads, in one-letter code: Protein lgg-2 (130 aa).

The Phosphatidylethanolamine amidated glycine moiety is linked to residue Gly-130.

It belongs to the ATG8 family. May interact with vps-39. Interacts with lgg-3; the interaction is direct. Interacts with atg-16.1 (via WD domain) and atg-16.2 (via WD 5-6 repeats); the interactions are direct. Interacts with sepa-1 (via the LIR motifs); the interaction is direct. Interacts with sqst-1 (via the LIR motifs); the interaction is direct. Interacts with epg-2 (via the LIR motifs); the interaction is weak. Interacts with atg-7; the interaction is direct. Interacts with atg-3. The interaction with atg-7 and atg-3 may be required for the lipidation of lgg-2. In terms of processing, this protein is subject to lipidation. Lipidation is regulated by lgg-1.

The protein localises to the cytoplasmic vesicle. The protein resides in the autophagosome. It is found in the cytoplasm. Its subcellular location is the cell membrane. In terms of biological role, ubiquitin-like modifier involved in the formation of autophagosomal vacuoles (autophagosomes). When lipidated mediates tethering between adjacent membranes and stimulates membrane fusion. Less effective at promoting membrane fusion than lgg-1. Acts upstream of the autophagy protein epg-5 in the aggrephagy pathway, which is the macroautophagic degradation of ubiquitinated protein aggregates, and preferentially interacts with autophagy proteins and substrates containing LIR motifs to mediate autophagosome formation and protein aggregate degradation. In particular binds to components of an atg-5-lgg-3-atg-16 complex to regulate autophagosome formation and cargo sequestration. Required for the degradation of specific sqst-1-containing aggregates during embryogenesis and the early stages of larval development. Involved in allophagy, which is an autophagic process in which paternal mitochondria and organelles are degraded during fertilization, and moreover is required for the degradation of lgg-1-positive allophagic autophagosomes in embryos. Involved in xenophagy, the autophagy-mediated degradation of pathogens and pathogen products, such as toxins. Also plays a role in membrane-pore repair. Through HOPS complex subunit vps-39, tethers lysosomes with autophagosomes to form autolysosomes. Plays a role in the distribution and clearance of germ cell specific P-granules from somatic cells to ensure exclusive localization of the P-granules in germ cells. Essential for dauer development and life-span extension. The polypeptide is Protein lgg-2 (Caenorhabditis elegans).